The sequence spans 694 residues: Two-component response regulator ORR25 (694 aa).

The region spanning 17-132 (RVLAVDDSPV…DIQNIWQHVW (116 aa)) is the Response regulatory domain. D68 is modified (4-aspartylphosphate). The HTH myb-type domain maps to 183-242 (TLKRQRVVWTPELHRDFVIAVHELGVDRAVPRKILRMMKVDYMTRENIASHLQKYRLYLK). Positions 213-238 (PRKILRMMKVDYMTRENIASHLQKYR) form a DNA-binding region, H-T-H motif. Residues 326 to 349 (VGHGGSPGNNPVFQPLQNSSNARK) are disordered. The segment covering 333–347 (GNNPVFQPLQNSSNA) has biased composition (polar residues).

It belongs to the ARR family. Type-B subfamily. Two-component system major event consists of a His-to-Asp phosphorelay between a sensor histidine kinase (HK) and a response regulator (RR). In plants, the His-to-Asp phosphorelay involves an additional intermediate named Histidine-containing phosphotransfer protein (HPt). This multistep phosphorelay consists of a His-Asp-His-Asp sequential transfer of a phosphate group between first a His and an Asp of the HK protein, followed by the transfer to a conserved His of the HPt protein and finally the transfer to an Asp in the receiver domain of the RR protein.

The protein localises to the nucleus. Its function is as follows. Transcriptional activator that binds specific DNA sequence. Functions as a response regulator involved in His-to-Asp phosphorelay signal transduction system. Phosphorylation of the Asp residue in the receiver domain activates the ability of the protein to promote the transcription of target genes. May directly activate some type-A response regulators in response to cytokinins. The protein is Two-component response regulator ORR25 of Oryza sativa subsp. japonica (Rice).